Here is a 93-residue protein sequence, read N- to C-terminus: MSDDNDEDAPAVELGEGARVAGAPIARVASRLTWALQKSEVVRKEGDTVVRTPDGPRDLDAVLEDVSTPYFETRREFERDVRAAMGAGPVPTE.

The protein is Protein VNG_0358C of Halobacterium salinarum (strain ATCC 700922 / JCM 11081 / NRC-1) (Halobacterium halobium).